A 281-amino-acid polypeptide reads, in one-letter code: ATP synthase gamma chain (281 aa).

The protein belongs to the ATPase gamma chain family. F-type ATPases have 2 components, CF(1) - the catalytic core - and CF(0) - the membrane proton channel. CF(1) has five subunits: alpha(3), beta(3), gamma(1), delta(1), epsilon(1). CF(0) has three main subunits: a, b and c.

The protein localises to the cell inner membrane. In terms of biological role, produces ATP from ADP in the presence of a proton gradient across the membrane. The gamma chain is believed to be important in regulating ATPase activity and the flow of protons through the CF(0) complex. The protein is ATP synthase gamma chain of Ehrlichia chaffeensis (strain ATCC CRL-10679 / Arkansas).